Reading from the N-terminus, the 367-residue chain is tRNA-specific 2-thiouridylase MnmA (367 aa).

ATP contacts are provided by residues 12–19 and methionine 38; that span reads GMSGGVDS. The tract at residues 98-100 is interaction with target base in tRNA; it reads NPD. The active-site Nucleophile is cysteine 103. Cysteine 103 and cysteine 200 are joined by a disulfide. Glycine 128 contributes to the ATP binding site. The segment at 150–152 is interaction with tRNA; the sequence is KDQ. The active-site Cysteine persulfide intermediate is the cysteine 200. The interaction with tRNA stretch occupies residues 312-313; that stretch reads RY.

The protein belongs to the MnmA/TRMU family.

The protein resides in the cytoplasm. The enzyme catalyses S-sulfanyl-L-cysteinyl-[protein] + uridine(34) in tRNA + AH2 + ATP = 2-thiouridine(34) in tRNA + L-cysteinyl-[protein] + A + AMP + diphosphate + H(+). Its function is as follows. Catalyzes the 2-thiolation of uridine at the wobble position (U34) of tRNA, leading to the formation of s(2)U34. The polypeptide is tRNA-specific 2-thiouridylase MnmA (Psychromonas ingrahamii (strain DSM 17664 / CCUG 51855 / 37)).